Consider the following 436-residue polypeptide: tRNA(Ile)-lysidine synthase (436 aa).

ATP is bound at residue 21-26 (SGGVDS).

It belongs to the tRNA(Ile)-lysidine synthase family.

The protein localises to the cytoplasm. It carries out the reaction cytidine(34) in tRNA(Ile2) + L-lysine + ATP = lysidine(34) in tRNA(Ile2) + AMP + diphosphate + H(+). In terms of biological role, ligates lysine onto the cytidine present at position 34 of the AUA codon-specific tRNA(Ile) that contains the anticodon CAU, in an ATP-dependent manner. Cytidine is converted to lysidine, thus changing the amino acid specificity of the tRNA from methionine to isoleucine. This is tRNA(Ile)-lysidine synthase from Aster yellows witches'-broom phytoplasma (strain AYWB).